A 365-amino-acid polypeptide reads, in one-letter code: Ribosomal RNA large subunit methyltransferase F (365 aa).

Residues Met-1–Ala-50 form a disordered region. Residues Ala-33–Ala-50 show a composition bias toward basic and acidic residues.

The protein belongs to the methyltransferase superfamily. METTL16/RlmF family.

The protein resides in the cytoplasm. It carries out the reaction adenosine(1618) in 23S rRNA + S-adenosyl-L-methionine = N(6)-methyladenosine(1618) in 23S rRNA + S-adenosyl-L-homocysteine + H(+). Functionally, specifically methylates the adenine in position 1618 of 23S rRNA. The protein is Ribosomal RNA large subunit methyltransferase F of Shewanella baltica (strain OS155 / ATCC BAA-1091).